The chain runs to 217 residues: Non-structural protein NS3 (217 aa).

It belongs to the orbivirus NS3 family.

May play a role in the release of virions from infected cells. The sequence is that of Non-structural protein NS3 (Segment-10) from Camelus dromedarius (Dromedary).